The chain runs to 186 residues: Ribosome-recycling factor (186 aa).

The protein belongs to the RRF family.

It is found in the cytoplasm. Its function is as follows. Responsible for the release of ribosomes from messenger RNA at the termination of protein biosynthesis. May increase the efficiency of translation by recycling ribosomes from one round of translation to another. This is Ribosome-recycling factor from Pediococcus pentosaceus (strain ATCC 25745 / CCUG 21536 / LMG 10740 / 183-1w).